The sequence spans 392 residues: Stilbene synthase 4 (392 aa).

Substrate is bound at residue 55-58; the sequence is KFNR. Cys-164 is an active-site residue. Substrate is bound by residues Leu-267 and 305-307; that span reads GGP.

This sequence belongs to the thiolase-like superfamily. Chalcone/stilbene synthases family. As to quaternary structure, homodimer.

Its subcellular location is the cytoplasm. The enzyme catalyses 4-coumaroyl-CoA + 3 malonyl-CoA + 3 H(+) = trans-resveratrol + 4 CO2 + 4 CoA. It functions in the pathway phytoalexin biosynthesis; 3,4',5-trihydroxystilbene biosynthesis; 3,4',5-trihydroxystilbene from trans-4-coumarate: step 2/2. In terms of biological role, mediates resistance to pathogens which are sensitive to stilbenes. The chain is Stilbene synthase 4 from Vitis vinifera (Grape).